Here is a 485-residue protein sequence, read N- to C-terminus: PTS system arbutin-, cellobiose-, and salicin-specific EIIBC component (485 aa).

Positions 1–88 (MAKNYAALAR…VSLLPGDMQP (88 aa)) constitute a PTS EIIB type-1 domain. Residue Cys28 is the Phosphocysteine intermediate; for EIIB activity of the active site. Helical transmembrane passes span 102–122 (IGAG…PAII), 147–167 (LTIL…MVAA), 177–197 (MSLA…ELMA), 207–227 (FALI…ALVM), 254–274 (LIVL…GIWI), 285–305 (IHGY…PLLV), 330–350 (VMPS…AVAW), 363–383 (AAAA…GVAI), 389–409 (LIAS…AGLA), and 433–453 (IVWV…LTLL). The region spanning 108–470 (DALIGTMSPL…VEEAAAQARK (363 aa)) is the PTS EIIC type-1 domain.

It is found in the cell inner membrane. In terms of biological role, the phosphoenolpyruvate-dependent sugar phosphotransferase system (sugar PTS), a major carbohydrate active -transport system, catalyzes the phosphorylation of incoming sugar substrates concomitantly with their translocation across the cell membrane. This system is involved in arbutin, cellobiose, and salicin transport. In Escherichia coli (strain K12), this protein is PTS system arbutin-, cellobiose-, and salicin-specific EIIBC component (ascF).